A 547-amino-acid polypeptide reads, in one-letter code: Serine beta-lactamase-like protein LACTB, mitochondrial (547 aa).

A mitochondrion-targeting transit peptide spans 1–115 (MYRLMSAVTA…RAIESSRDLL (115 aa)). The segment covering 62–83 (GAAPAQSPAAPDPEASPLAEPP) has biased composition (low complexity). The tract at residues 62–96 (GAAPAQSPAAPDPEASPLAEPPQEQSLAPWSPQTP) is disordered. The Acyl-ester intermediate role is filled by Ser164. Lys283 and Lys284 each carry N6-succinyllysine. N6-acetyllysine occurs at positions 297 and 342.

The protein belongs to the peptidase S12 family. In terms of tissue distribution, expressed predominantly in skeletal muscle.

Its subcellular location is the mitochondrion. Mitochondrial serine protease that acts as a regulator of mitochondrial lipid metabolism. Acts by decreasing protein levels of PISD, a mitochondrial enzyme that converts phosphatidylserine (PtdSer) to phosphatidylethanolamine (PtdEtn), thereby affecting mitochondrial lipid metabolism. It is unclear whether it acts directly by mediating proteolysis of PISD or by mediating proteolysis of another lipid metabolism protein. Acts as a tumor suppressor that has the ability to inhibit proliferation of multiple types of breast cancer cells: probably by promoting decreased levels of PISD, thereby affecting mitochondrial lipid metabolism. In Homo sapiens (Human), this protein is Serine beta-lactamase-like protein LACTB, mitochondrial.